Here is a 125-residue protein sequence, read N- to C-terminus: Small ribosomal subunit protein uS13 (125 aa).

Residues 92-125 form a disordered region; that stretch reads RRHLPVHGQRTKTNARTRKGPKKTVAGKKKAGKK.

This sequence belongs to the universal ribosomal protein uS13 family. In terms of assembly, part of the 30S ribosomal subunit. Forms a loose heterodimer with protein S19. Forms two bridges to the 50S subunit in the 70S ribosome.

Located at the top of the head of the 30S subunit, it contacts several helices of the 16S rRNA. In the 70S ribosome it contacts the 23S rRNA (bridge B1a) and protein L5 of the 50S subunit (bridge B1b), connecting the 2 subunits; these bridges are implicated in subunit movement. Contacts the tRNAs in the A and P-sites. This chain is Small ribosomal subunit protein uS13, found in Saccharopolyspora erythraea (strain ATCC 11635 / DSM 40517 / JCM 4748 / NBRC 13426 / NCIMB 8594 / NRRL 2338).